A 73-amino-acid chain; its full sequence is MSKPVNPSQRTPLCARCRKQAVAAEYRPFCSKRCADADLGQWLKGGYVIPGAAAEQADDTAGPGAAEDDTDSH.

Residues cysteine 14, cysteine 17, cysteine 30, and cysteine 34 each coordinate Zn(2+). The tract at residues 54-73 (AEQADDTAGPGAAEDDTDSH) is disordered.

This sequence belongs to the DNA gyrase inhibitor YacG family. As to quaternary structure, interacts with GyrB. Zn(2+) serves as cofactor.

Functionally, inhibits all the catalytic activities of DNA gyrase by preventing its interaction with DNA. Acts by binding directly to the C-terminal domain of GyrB, which probably disrupts DNA binding by the gyrase. The protein is DNA gyrase inhibitor YacG of Hyphomonas neptunium (strain ATCC 15444).